A 176-amino-acid polypeptide reads, in one-letter code: Flavodoxin-like domain-containing protein BilS (176 aa).

Its pathway is porphyrin-containing compound metabolism; protoheme degradation. Functionally, together with BilR, catalyzes reduction of mesobilirubin and/or bilirubin to urobilinogen, a key step during heme degradation. BilS is probably involved in electron transfer for the bilirubin reductase BilR. In Clostridioides difficile (strain CD3), this protein is Flavodoxin-like domain-containing protein BilS.